Consider the following 323-residue polypeptide: tRNA N6-adenosine threonylcarbamoyltransferase (323 aa).

Fe cation-binding residues include H106, H110, and Y127. Residues 127–131, D159, G172, E176, and N255 contribute to the substrate site; that span reads YVSGA. D283 contributes to the Fe cation binding site.

This sequence belongs to the KAE1 / TsaD family. As to quaternary structure, monomer. Component of the KEOPS complex that consists of Kae1, Bud32, Cgi121 and Pcc1; the whole complex dimerizes. Fe(2+) serves as cofactor.

Its subcellular location is the cytoplasm. It catalyses the reaction L-threonylcarbamoyladenylate + adenosine(37) in tRNA = N(6)-L-threonylcarbamoyladenosine(37) in tRNA + AMP + H(+). In terms of biological role, required for the formation of a threonylcarbamoyl group on adenosine at position 37 (t(6)A37) in tRNAs that read codons beginning with adenine. Is a component of the KEOPS complex that is probably involved in the transfer of the threonylcarbamoyl moiety of threonylcarbamoyl-AMP (TC-AMP) to the N6 group of A37. Kae1 likely plays a direct catalytic role in this reaction, but requires other protein(s) of the complex to fulfill this activity. This is tRNA N6-adenosine threonylcarbamoyltransferase from Methanocella arvoryzae (strain DSM 22066 / NBRC 105507 / MRE50).